The primary structure comprises 88 residues: Small ribosomal subunit protein uS15c (88 aa).

This sequence belongs to the universal ribosomal protein uS15 family. As to quaternary structure, part of the 30S ribosomal subunit.

The protein localises to the plastid. Its subcellular location is the chloroplast. The polypeptide is Small ribosomal subunit protein uS15c (rps15) (Draba nemorosa (Woodland whitlowgrass)).